The following is a 223-amino-acid chain: Endonuclease III (223 aa).

The HhH domain maps to 118–137; the sequence is RDFLTAIEGIGDKTADVVLL. [4Fe-4S] cluster is bound by residues C198, C205, C208, and C214.

Belongs to the Nth/MutY family. Requires [4Fe-4S] cluster as cofactor.

It carries out the reaction 2'-deoxyribonucleotide-(2'-deoxyribose 5'-phosphate)-2'-deoxyribonucleotide-DNA = a 3'-end 2'-deoxyribonucleotide-(2,3-dehydro-2,3-deoxyribose 5'-phosphate)-DNA + a 5'-end 5'-phospho-2'-deoxyribonucleoside-DNA + H(+). Its function is as follows. Probably part of a 4-gene DNA damage response locus in which the upstream ups system, in combination with this downstream locus, functions in homologous recombination to rescue Sulfolobales from DNA-damaging threats. DNA repair enzyme that has both DNA N-glycosylase activity and AP-lyase activity. The DNA N-glycosylase activity releases various damaged pyrimidines from DNA by cleaving the N-glycosidic bond, leaving an AP (apurinic/apyrimidinic) site. The AP-lyase activity cleaves the phosphodiester bond 3' to the AP site by a beta-elimination, leaving a 3'-terminal unsaturated sugar and a product with a terminal 5'-phosphate. Nicks UV-treated plasmid DNA in a dose-dependent manner, has no activity on untreated DNA. The polypeptide is Endonuclease III (Sulfolobus acidocaldarius (strain ATCC 33909 / DSM 639 / JCM 8929 / NBRC 15157 / NCIMB 11770)).